The primary structure comprises 84 residues: Acyl carrier protein homolog (84 aa).

The Carrier domain maps to 4–79 (HEILLKIKEI…DLVLEVKNLL (76 aa)). The residue at position 39 (serine 39) is an O-(pantetheine 4'-phosphoryl)serine.

4'-phosphopantetheine is transferred from CoA to a specific serine of the apo-ACP-like protein.

Its pathway is lipid metabolism; fatty acid biosynthesis. In terms of biological role, carrier of the growing fatty acid chain in fatty acid biosynthesis. The protein is Acyl carrier protein homolog of Mycoplasma genitalium (strain ATCC 33530 / DSM 19775 / NCTC 10195 / G37) (Mycoplasmoides genitalium).